A 412-amino-acid polypeptide reads, in one-letter code: Tyrosine--tRNA ligase (412 aa).

Residue Tyr31 participates in L-tyrosine binding. Positions 36–45 (PTAPSLHIGH) match the 'HIGH' region motif. The L-tyrosine site is built by Tyr162 and Gln166. Positions 222–226 (KIGKT) match the 'KMSKS' region motif. Lys225 provides a ligand contact to ATP. Residues 345 to 411 (KRWLDIVVEL…GKRKKQVIDL (67 aa)) form the S4 RNA-binding domain.

The protein belongs to the class-I aminoacyl-tRNA synthetase family. TyrS type 1 subfamily. Homodimer.

The protein resides in the cytoplasm. It carries out the reaction tRNA(Tyr) + L-tyrosine + ATP = L-tyrosyl-tRNA(Tyr) + AMP + diphosphate + H(+). In terms of biological role, catalyzes the attachment of tyrosine to tRNA(Tyr) in a two-step reaction: tyrosine is first activated by ATP to form Tyr-AMP and then transferred to the acceptor end of tRNA(Tyr). In Chlamydia trachomatis serovar L2 (strain ATCC VR-902B / DSM 19102 / 434/Bu), this protein is Tyrosine--tRNA ligase.